A 151-amino-acid chain; its full sequence is MKVILLTEVKKLGKKGDVVEVAEGYGRNYLIAKGLAVEATEGKLKELQQQKEAANRRKEKELQEARSLAEKLKNIELVLYGKGGENGKLFGAITSKDIAEALEKNYQIKIDKRKLDLKENIKALGVYTVEVKLHPEVTAKLKVAVKEEGRG.

The protein belongs to the bacterial ribosomal protein bL9 family.

In terms of biological role, binds to the 23S rRNA. In Carboxydothermus hydrogenoformans (strain ATCC BAA-161 / DSM 6008 / Z-2901), this protein is Large ribosomal subunit protein bL9.